A 904-amino-acid polypeptide reads, in one-letter code: Alanine--tRNA ligase (904 aa).

Residues His-600, His-604, Cys-704, and His-708 each coordinate Zn(2+).

This sequence belongs to the class-II aminoacyl-tRNA synthetase family. Zn(2+) serves as cofactor.

It localises to the cytoplasm. The enzyme catalyses tRNA(Ala) + L-alanine + ATP = L-alanyl-tRNA(Ala) + AMP + diphosphate. In terms of biological role, catalyzes the attachment of alanine to tRNA(Ala) in a two-step reaction: alanine is first activated by ATP to form Ala-AMP and then transferred to the acceptor end of tRNA(Ala). Also edits incorrectly charged Ser-tRNA(Ala) and Gly-tRNA(Ala) via its editing domain. The chain is Alanine--tRNA ligase from Metallosphaera sedula (strain ATCC 51363 / DSM 5348 / JCM 9185 / NBRC 15509 / TH2).